We begin with the raw amino-acid sequence, 254 residues long: Probable derlin-2 homolog (254 aa).

Residues 1 to 17 (MAQPFEDWYKNLPIVTK) are Cytoplasmic-facing. A helical transmembrane segment spans residues 18 to 38 (IYMTGCVVTSVSVYLGLVGPL). Residues 39–95 (RLYLNFPLVFGKYEFWRLFTNFFFYDEIGMNFFFHMYFLVRHSRLLEESSFRGRSAD) are Lumenal-facing. The chain crosses the membrane as a helical span at residues 96-116 (YLFMWIFGSFLLLIMDAFLFY). The Cytoplasmic segment spans residues 117–118 (TK). Residues 119–139 (IVTKVLFLAPSIAFMVIYVWS) form a helical membrane-spanning segment. Over 140-146 (RRNPNMH) the chain is Lumenal. Residues 147-167 (ISFLGLFTFSAPYLPWVILIM) traverse the membrane as a helical segment. Residues 168–254 (GYLFNHDLTT…FLNEDDLDQQ (87 aa)) lie on the Cytoplasmic side of the membrane.

This sequence belongs to the derlin family.

It localises to the endoplasmic reticulum membrane. In terms of biological role, may be involved in the degradation process of specific misfolded endoplasmic reticulum (ER) luminal proteins. May also be involved in endoplasmic reticulum stress-induced pre-emptive quality control, a mechanism that selectively attenuates the translocation of newly synthesized proteins into the endoplasmic reticulum and reroutes them to the cytosol for proteasomal degradation. The chain is Probable derlin-2 homolog (derl2) from Dictyostelium discoideum (Social amoeba).